Reading from the N-terminus, the 313-residue chain is Ribosomal RNA small subunit methyltransferase H (313 aa).

Residues 35–37 (GGH), Asp-55, Phe-80, Asp-102, and Gln-109 each bind S-adenosyl-L-methionine.

The protein belongs to the methyltransferase superfamily. RsmH family.

Its subcellular location is the cytoplasm. It catalyses the reaction cytidine(1402) in 16S rRNA + S-adenosyl-L-methionine = N(4)-methylcytidine(1402) in 16S rRNA + S-adenosyl-L-homocysteine + H(+). Its function is as follows. Specifically methylates the N4 position of cytidine in position 1402 (C1402) of 16S rRNA. In Shewanella loihica (strain ATCC BAA-1088 / PV-4), this protein is Ribosomal RNA small subunit methyltransferase H.